We begin with the raw amino-acid sequence, 924 residues long: DNA repair and recombination protein RDH54 (924 aa).

The segment covering 1 to 10 (MQIPKYENKP) has biased composition (basic and acidic residues). Disordered stretches follow at residues 1–21 (MQIPKYENKPFKPPRRVGSNK) and 155–183 (EALSQNMGNPNPPTTSTTETVPSTKNDGG). Residues 168 to 178 (TTSTTETVPST) are compositionally biased toward low complexity. The 189-residue stretch at 299–487 (LENDSDISGC…FTIIDFINPG (189 aa)) folds into the Helicase ATP-binding domain. Position 346 to 353 (346 to 353 (IPLTGLCK)) interacts with ATP. The DEGH box motif lies at 472 to 475 (NDLN). Residue Lys-615 forms a Glycyl lysine isopeptide (Lys-Gly) (interchain with G-Cter in ubiquitin) linkage. The 160-residue stretch at 631–790 (KLRVLMTLLE…DSEMRNKESS (160 aa)) folds into the Helicase C-terminal domain.

This sequence belongs to the SNF2/RAD54 helicase family. In terms of assembly, interacts with RAD51 and DMC1.

The protein localises to the nucleus. It catalyses the reaction ATP + H2O = ADP + phosphate + H(+). Involved in the recombinational repair of double-strand breaks (DSB) in DNA during mitosis and meiosis. Has DNA dependent ATPase activity. Promotes D-loop (displacement loop) formation with RAD51 recombinase. Modifies the topology of double-stranded DNA during the D-loop reaction to facilitate the invasion of the homologous duplex molecule by the initiating single-stranded DNA substrate. Required for adaptation from G2/M checkpoint arrest induced by a double strand break, by participating in monitoring the extent of single-stranded DNA produced by resection of DNA ends. This role is distinct from its roles in recombination. Promotes colocalization of RAD51 and DMC1 during meiotic recombination. Involved in crossover interference. This Saccharomyces cerevisiae (strain RM11-1a) (Baker's yeast) protein is DNA repair and recombination protein RDH54 (RDH54).